The sequence spans 578 residues: DNA mismatch repair protein MutL (578 aa).

This sequence belongs to the DNA mismatch repair MutL/HexB family.

Its function is as follows. This protein is involved in the repair of mismatches in DNA. It is required for dam-dependent methyl-directed DNA mismatch repair. May act as a 'molecular matchmaker', a protein that promotes the formation of a stable complex between two or more DNA-binding proteins in an ATP-dependent manner without itself being part of a final effector complex. The sequence is that of DNA mismatch repair protein MutL from Carboxydothermus hydrogenoformans (strain ATCC BAA-161 / DSM 6008 / Z-2901).